Reading from the N-terminus, the 186-residue chain is MKYLVAGLGNVGQKYENSRHNIGFMILDALAKASSVVFTDKCYGAIASLKLKNKCLFLLKPSTYMNLSGNAIRYWLQKENIYSENLLILVDDLSLPFGSLRLKTKGSDGGHNGLKNIQYTLRTKYYNRLRFGIGNNFPSGCQINYVLDNFTKEEKKHLSERIEKAIEIVYSFCLSGSEITMNLFNK.

A tRNA-binding site is contributed by Tyr-15. His-20 (proton acceptor) is an active-site residue. Positions 64, 66, and 112 each coordinate tRNA.

It belongs to the PTH family. In terms of assembly, monomer.

Its subcellular location is the cytoplasm. The enzyme catalyses an N-acyl-L-alpha-aminoacyl-tRNA + H2O = an N-acyl-L-amino acid + a tRNA + H(+). Hydrolyzes ribosome-free peptidyl-tRNAs (with 1 or more amino acids incorporated), which drop off the ribosome during protein synthesis, or as a result of ribosome stalling. Functionally, catalyzes the release of premature peptidyl moieties from peptidyl-tRNA molecules trapped in stalled 50S ribosomal subunits, and thus maintains levels of free tRNAs and 50S ribosomes. In Azobacteroides pseudotrichonymphae genomovar. CFP2, this protein is Peptidyl-tRNA hydrolase.